Reading from the N-terminus, the 247-residue chain is Carboxy-S-adenosyl-L-methionine synthase (247 aa).

Residues Tyr-39, 64–66 (GCS), 89–90 (DN), 117–118 (DI), Asn-132, and Arg-199 contribute to the S-adenosyl-L-methionine site.

The protein belongs to the class I-like SAM-binding methyltransferase superfamily. Cx-SAM synthase family. In terms of assembly, homodimer.

It carries out the reaction prephenate + S-adenosyl-L-methionine = carboxy-S-adenosyl-L-methionine + 3-phenylpyruvate + H2O. In terms of biological role, catalyzes the conversion of S-adenosyl-L-methionine (SAM) to carboxy-S-adenosyl-L-methionine (Cx-SAM). This Escherichia coli O7:K1 (strain IAI39 / ExPEC) protein is Carboxy-S-adenosyl-L-methionine synthase.